The primary structure comprises 431 residues: tRNA(Ile)-lysidine synthase (431 aa).

Residue 19–24 (STGIDS) participates in ATP binding.

The protein belongs to the tRNA(Ile)-lysidine synthase family.

It is found in the cytoplasm. The catalysed reaction is cytidine(34) in tRNA(Ile2) + L-lysine + ATP = lysidine(34) in tRNA(Ile2) + AMP + diphosphate + H(+). Ligates lysine onto the cytidine present at position 34 of the AUA codon-specific tRNA(Ile) that contains the anticodon CAU, in an ATP-dependent manner. Cytidine is converted to lysidine, thus changing the amino acid specificity of the tRNA from methionine to isoleucine. The chain is tRNA(Ile)-lysidine synthase from Staphylococcus aureus (strain Mu50 / ATCC 700699).